We begin with the raw amino-acid sequence, 93 residues long: Putative pterin-4-alpha-carbinolamine dehydratase (93 aa).

Belongs to the pterin-4-alpha-carbinolamine dehydratase family.

The enzyme catalyses (4aS,6R)-4a-hydroxy-L-erythro-5,6,7,8-tetrahydrobiopterin = (6R)-L-erythro-6,7-dihydrobiopterin + H2O. The protein is Putative pterin-4-alpha-carbinolamine dehydratase of Nostoc sp. (strain PCC 7120 / SAG 25.82 / UTEX 2576).